The primary structure comprises 141 residues: Putative nickel-responsive regulator (141 aa).

Histidine 80, histidine 91, histidine 93, and cysteine 99 together coordinate Ni(2+).

This sequence belongs to the transcriptional regulatory CopG/NikR family. Ni(2+) serves as cofactor.

Its function is as follows. Transcriptional regulator. The protein is Putative nickel-responsive regulator of Methanococcus aeolicus (strain ATCC BAA-1280 / DSM 17508 / OCM 812 / Nankai-3).